A 358-amino-acid polypeptide reads, in one-letter code: uncharacterized protein (358 aa).

Zn(2+) contacts are provided by Cys-39, His-61, Cys-92, Cys-95, Cys-98, Cys-106, and Asp-157.

This sequence belongs to the zinc-containing alcohol dehydrogenase family. Zn(2+) serves as cofactor.

This is an uncharacterized protein from Escherichia coli (strain K12).